A 357-amino-acid polypeptide reads, in one-letter code: N-acetyl-gamma-glutamyl-phosphate reductase (357 aa).

The active site involves cysteine 160.

It belongs to the NAGSA dehydrogenase family. Type 1 subfamily.

The protein resides in the cytoplasm. The enzyme catalyses N-acetyl-L-glutamate 5-semialdehyde + phosphate + NADP(+) = N-acetyl-L-glutamyl 5-phosphate + NADPH + H(+). The protein operates within amino-acid biosynthesis; L-arginine biosynthesis; N(2)-acetyl-L-ornithine from L-glutamate: step 3/4. Its function is as follows. Catalyzes the NADPH-dependent reduction of N-acetyl-5-glutamyl phosphate to yield N-acetyl-L-glutamate 5-semialdehyde. In Prochlorococcus marinus (strain MIT 9313), this protein is N-acetyl-gamma-glutamyl-phosphate reductase.